Reading from the N-terminus, the 117-residue chain is Small ribosomal subunit protein bS6m (117 aa).

The protein belongs to the bacterial ribosomal protein bS6 family. As to quaternary structure, component of the mitochondrial small ribosomal subunit (mt-SSU). Mature N.crassa 74S mitochondrial ribosomes consist of a small (37S) and a large (54S) subunit. The 37S small subunit contains a 16S ribosomal RNA (16S mt-rRNA) and 32 different proteins. The 54S large subunit contains a 23S rRNA (23S mt-rRNA) and 42 different proteins.

Its subcellular location is the mitochondrion. Component of the mitochondrial ribosome (mitoribosome), a dedicated translation machinery responsible for the synthesis of mitochondrial genome-encoded proteins, including at least some of the essential transmembrane subunits of the mitochondrial respiratory chain. The mitoribosomes are attached to the mitochondrial inner membrane and translation products are cotranslationally integrated into the membrane. The protein is Small ribosomal subunit protein bS6m (mrp17) of Neurospora crassa (strain ATCC 24698 / 74-OR23-1A / CBS 708.71 / DSM 1257 / FGSC 987).